The primary structure comprises 461 residues: Cysteine--tRNA ligase (461 aa).

Position 28 (Cys-28) interacts with Zn(2+). The short motif at 30-40 (VTIYDLCHIGH) is the 'HIGH' region element. Cys-209, His-234, and Glu-238 together coordinate Zn(2+). Positions 266 to 270 (KMSKS) match the 'KMSKS' region motif. Residue Lys-269 coordinates ATP.

Belongs to the class-I aminoacyl-tRNA synthetase family. In terms of assembly, monomer. Zn(2+) is required as a cofactor.

It localises to the cytoplasm. It carries out the reaction tRNA(Cys) + L-cysteine + ATP = L-cysteinyl-tRNA(Cys) + AMP + diphosphate. The chain is Cysteine--tRNA ligase from Edwardsiella ictaluri (strain 93-146).